A 464-amino-acid chain; its full sequence is tRNA modification GTPase MnmE (464 aa).

Positions 27, 89, and 128 each coordinate (6S)-5-formyl-5,6,7,8-tetrahydrofolate. Residues 225–384 form the TrmE-type G domain; it reads GLATAIIGHP…LEDRIAAMFF (160 aa). Asn-235 contributes to the K(+) binding site. GTP is bound by residues 235–240, 254–260, and 279–282; these read NVGKSS, TDVAGTT, and DTAG. Ser-239 provides a ligand contact to Mg(2+). Positions 254, 256, and 259 each coordinate K(+). Thr-260 contributes to the Mg(2+) binding site. Lys-464 contacts (6S)-5-formyl-5,6,7,8-tetrahydrofolate.

The protein belongs to the TRAFAC class TrmE-Era-EngA-EngB-Septin-like GTPase superfamily. TrmE GTPase family. In terms of assembly, homodimer. Heterotetramer of two MnmE and two MnmG subunits. Requires K(+) as cofactor.

The protein resides in the cytoplasm. Exhibits a very high intrinsic GTPase hydrolysis rate. Involved in the addition of a carboxymethylaminomethyl (cmnm) group at the wobble position (U34) of certain tRNAs, forming tRNA-cmnm(5)s(2)U34. In Pediococcus pentosaceus (strain ATCC 25745 / CCUG 21536 / LMG 10740 / 183-1w), this protein is tRNA modification GTPase MnmE.